The following is a 255-amino-acid chain: 2,3-dehydroadipyl-CoA hydratase (255 aa).

This sequence belongs to the enoyl-CoA hydratase/isomerase family.

The catalysed reaction is a (3S)-3-hydroxyacyl-CoA = a (2E)-enoyl-CoA + H2O. The enzyme catalyses a 4-saturated-(3S)-3-hydroxyacyl-CoA = a (3E)-enoyl-CoA + H2O. It functions in the pathway aromatic compound metabolism; phenylacetate degradation. Its function is as follows. Catalyzes the reversible conversion of enzymatically produced 2,3-dehydroadipyl-CoA into 3-hydroxyadipyl-CoA. The chain is 2,3-dehydroadipyl-CoA hydratase (paaF) from Escherichia coli (strain K12).